A 1392-amino-acid polypeptide reads, in one-letter code: ENHANCER OF AG-4 protein 2 (1392 aa).

The 58-residue stretch at 20–77 (LGDLVLAKVKGFPAWPAKISRPEDWDRAPDPKKYFVQFFGTEEIAFVAPPDIQAFTSE) folds into the PWWP domain. Positions 184 to 194 (ESKVKTTSPVS) are enriched in polar residues. Disordered stretches follow at residues 184–354 (ESKV…STGT), 384–428 (KRQR…PAAQ), 575–613 (KKPQ…GERL), and 723–766 (QGHH…GGSL). Composition is skewed to basic and acidic residues over residues 196 to 215 (SLEH…DKGT), 239 to 258 (KEAG…DKSN), and 311 to 345 (LESE…KCEI). A compositionally biased stretch (polar residues) spans 391–400 (EHATSPSFSG). Residues 401–417 (SRDKSGKGHLEQKDRSS) are compositionally biased toward basic and acidic residues. Composition is skewed to polar residues over residues 591–601 (KISSSQSQPAN) and 725–744 (HHQQ…SRNQ). The 142-residue stretch at 771 to 912 (EAAISRDAFE…RYIDDIRASG (142 aa)) folds into the CID domain. 3 disordered regions span residues 957-986 (FFSS…AGER), 1014-1356 (LEME…NYQP), and 1369-1392 (PGHT…WRPA). Over residues 1059-1129 (EDSPPLPQES…SPPPPPPPPS (71 aa)) the composition is skewed to pro residues. The segment covering 1157-1175 (LSHQTYPGSMQQDRSSIFT) has biased composition (polar residues). Positions 1215–1225 (SSREPSSFTSS) are enriched in low complexity. 2 stretches are compositionally biased toward polar residues: residues 1240–1255 (EASS…TPLS) and 1265–1284 (APSS…QHSY). A compositionally biased stretch (basic and acidic residues) spans 1293–1306 (QRDDARRYRNEEPW). Polar residues predominate over residues 1311 to 1320 (SGHSAENQNG).

Expressed in the inflorescence meristem, floral primordia, inflorescence stem, and floral pedicels. Also detected in the shoot apical meristem, stems, leaves, embryos, and roots.

The protein localises to the nucleus. In terms of biological role, transcription factor that functions as a repressor of flowering by enhancing the expression of several genes that delay flowering including FLC, FLM/MAF1, MAF2 and SVP. Also acts in the floral homeotic AGAMOUS (AG) pathway, specifically by processing the AGAMOUS pre-mRNA. Functions in association with HUA1 and HEN4 in AG pre-mRNA processing. Involved in all three aspects of the AG functions, the specification of stamen and carpel identities, the control of floral determinacy, and the spatial restriction of AP1 expression. Acts as a transcription regulator that controls anthocyanin accumulation. The chain is ENHANCER OF AG-4 protein 2 from Arabidopsis thaliana (Mouse-ear cress).